A 159-amino-acid chain; its full sequence is Crossover junction endodeoxyribonuclease RuvC (159 aa).

Catalysis depends on residues Asp7, Glu66, and Asp139. Residues Asp7, Glu66, and Asp139 each coordinate Mg(2+).

The protein belongs to the RuvC family. As to quaternary structure, homodimer which binds Holliday junction (HJ) DNA. The HJ becomes 2-fold symmetrical on binding to RuvC with unstacked arms; it has a different conformation from HJ DNA in complex with RuvA. In the full resolvosome a probable DNA-RuvA(4)-RuvB(12)-RuvC(2) complex forms which resolves the HJ. It depends on Mg(2+) as a cofactor.

Its subcellular location is the cytoplasm. It catalyses the reaction Endonucleolytic cleavage at a junction such as a reciprocal single-stranded crossover between two homologous DNA duplexes (Holliday junction).. In terms of biological role, the RuvA-RuvB-RuvC complex processes Holliday junction (HJ) DNA during genetic recombination and DNA repair. Endonuclease that resolves HJ intermediates. Cleaves cruciform DNA by making single-stranded nicks across the HJ at symmetrical positions within the homologous arms, yielding a 5'-phosphate and a 3'-hydroxyl group; requires a central core of homology in the junction. The consensus cleavage sequence is 5'-(A/T)TT(C/G)-3'. Cleavage occurs on the 3'-side of the TT dinucleotide at the point of strand exchange. HJ branch migration catalyzed by RuvA-RuvB allows RuvC to scan DNA until it finds its consensus sequence, where it cleaves and resolves the cruciform DNA. In Sulfurovum sp. (strain NBC37-1), this protein is Crossover junction endodeoxyribonuclease RuvC.